The chain runs to 324 residues: HTH-type transcriptional regulator CysB (324 aa).

Residues 1-59 enclose the HTH lysR-type domain; the sequence is MKLQQLRYIVEVVNHNLNVSSTAEGLYTSQPGISKQVRMLEDELGIQIFSRSGKHLTQV. Residues 19–38 constitute a DNA-binding region (H-T-H motif); that stretch reads VSSTAEGLYTSQPGISKQVR.

This sequence belongs to the LysR transcriptional regulatory family. Homotetramer.

It is found in the cytoplasm. Functionally, this protein is a positive regulator of gene expression for the cysteine regulon. The inducer for CysB is N-acetylserine. The chain is HTH-type transcriptional regulator CysB (cysB) from Escherichia coli O157:H7.